Consider the following 556-residue polypeptide: 2-succinyl-5-enolpyruvyl-6-hydroxy-3-cyclohexene-1-carboxylate synthase (556 aa).

Belongs to the TPP enzyme family. MenD subfamily. In terms of assembly, homodimer. It depends on Mg(2+) as a cofactor. Mn(2+) is required as a cofactor. Requires thiamine diphosphate as cofactor.

The catalysed reaction is isochorismate + 2-oxoglutarate + H(+) = 5-enolpyruvoyl-6-hydroxy-2-succinyl-cyclohex-3-ene-1-carboxylate + CO2. The protein operates within quinol/quinone metabolism; 1,4-dihydroxy-2-naphthoate biosynthesis; 1,4-dihydroxy-2-naphthoate from chorismate: step 2/7. It functions in the pathway quinol/quinone metabolism; menaquinone biosynthesis. In terms of biological role, catalyzes the thiamine diphosphate-dependent decarboxylation of 2-oxoglutarate and the subsequent addition of the resulting succinic semialdehyde-thiamine pyrophosphate anion to isochorismate to yield 2-succinyl-5-enolpyruvyl-6-hydroxy-3-cyclohexene-1-carboxylate (SEPHCHC). The sequence is that of 2-succinyl-5-enolpyruvyl-6-hydroxy-3-cyclohexene-1-carboxylate synthase from Escherichia coli O45:K1 (strain S88 / ExPEC).